Here is a 552-residue protein sequence, read N- to C-terminus: MTTSADQTDVLVIGSGPGGAGVTLKLVQAGYKVTCLEQGPWVTPPEHPHYHREWEIEKQRGWAYDPNVRGLPEDYPVTGFTTPYLMNNVGGSTMHYAGHWPRYKPVDFRKGTEHGLEGTIDWPISYEELAPYYDENDAIYGISGMVGDPSYPDRTGVDRDPPVKPGKLGRNFAQALGDLGWHWWPSDNAIITRPREGREADIAAGNELSGSPTGSLSTPTHTHWPTAIALGADLRTHARVEQIHTKNGKATGATYIDTRTGARHEINAKIVVVSASGIGTPRLLLMSAQKGHPDGLANSNGLVGKYLMHHILRVLASVVRTSRMEGYKGAFGAPLYSHEFYHTDTNRGFVNGFGMQVARSFGAAYTAMGSHTGYVAPWGKSHRKFFNEHFGNHLMVFMFGEDLPVETNCVTLDPDAKDSSGLPAARVNWEPHENDIALANYGIDRIFEAARALGAVETNDTGVLNPPPGWHLMGTCRMGNNPEDSVTNKWHQTWDVPNLFVVDGSSLTTGGAVNPTSTIGALAVRAGDYISRRFSDIVDQRTTPSNEDAPAI.

This sequence belongs to the GMC oxidoreductase family. Requires FAD as cofactor.

Its subcellular location is the cytoplasm. The enzyme catalyses 2-methylpropane-1,2-diol + NAD(+) = 2-hydroxy-2-methylpropanal + NADH + H(+). Its function is as follows. Involved in the degradation of methyl tert-butyl ether (MTBE). Catalyzes the conversion of 2-methyl 1,2-propanediol (2-M1,2-PD) to hydroxyisobutyraldehyde. The chain is 2-methyl-1,2-propanediol dehydrogenase from Mycolicibacterium austroafricanum (Mycobacterium austroafricanum).